The primary structure comprises 157 residues: Myosin regulatory light chain, striated adductor muscle (157 aa).

2 consecutive EF-hand domains span residues 16–51 and 85–120; these read KQIQEMKEAFSMIDVDRDGFVSKEDIKAISEQLGRA and DSEETIRNAFAMFDEQETKKLNIEYIKDLLENMGDN. Ca(2+) contacts are provided by D29, D31, D33, and D40.

In terms of biological role, in molluscan muscle, calcium regulation is associated with myosin rather than with actin. Muscle myosin contains two types of light chains: the catalytic light chain, essential for ATPase activity, and the regulatory light chain, a calcium-binding protein responsible for Ca(2+) dependent binding and Ca(2+) dependent Mg-ATPase activity. The sequence is that of Myosin regulatory light chain, striated adductor muscle from Argopecten irradians (Bay scallop).